The primary structure comprises 315 residues: 2,3-dihydroxyphenylpropionate/2,3-dihydroxicinnamic acid 1,2-dioxygenase (315 aa).

Residue His-118 is the Proton donor of the active site. His-182 serves as the catalytic Proton acceptor.

This sequence belongs to the LigB/MhpB extradiol dioxygenase family. In terms of assembly, homotetramer. The cofactor is Fe(2+).

The enzyme catalyses 3-(2,3-dihydroxyphenyl)propanoate + O2 = (2Z,4E)-2-hydroxy-6-oxonona-2,4-dienedioate + H(+). The catalysed reaction is (2E)-3-(2,3-dihydroxyphenyl)prop-2-enoate + O2 = (2Z,4E,7E)-2-hydroxy-6-oxonona-2,4,7-trienedioate + H(+). The protein operates within aromatic compound metabolism; 3-phenylpropanoate degradation. In terms of biological role, catalyzes the non-heme iron(II)-dependent oxidative cleavage of 2,3-dihydroxyphenylpropionic acid and 2,3-dihydroxicinnamic acid into 2-hydroxy-6-ketononadienedioate and 2-hydroxy-6-ketononatrienedioate, respectively. This chain is 2,3-dihydroxyphenylpropionate/2,3-dihydroxicinnamic acid 1,2-dioxygenase, found in Mycolicibacterium gilvum (strain PYR-GCK) (Mycobacterium gilvum (strain PYR-GCK)).